The sequence spans 142 residues: Hemoglobin subunit alpha-B (142 aa).

The Globin domain maps to 2 to 142 (PFSASDRHDI…VSETLYSKYR (141 aa)). Glutamine 59 contributes to the O2 binding site. A heme b-binding site is contributed by histidine 88.

Belongs to the globin family. Heterotetramer of either two alpha-B chains or two alpha-C chains and two beta chains. The two major hemoglobins, B and C, associate upon deoxygenation to form a trimer of tetramers, BC2, that has a much lower affinity for oxygen than either component alone. As to expression, red blood cells.

In terms of biological role, the alpha-B chain is a component of adult hemoglobin B. The polypeptide is Hemoglobin subunit alpha-B (Aquarana catesbeiana (American bullfrog)).